The primary structure comprises 454 residues: Histidine--tRNA ligase (454 aa).

A disordered region spans residues 434 to 454; it reads ADAGAWNPPTEDLHPGVIGTW.

It belongs to the class-II aminoacyl-tRNA synthetase family. Homodimer.

It is found in the cytoplasm. The catalysed reaction is tRNA(His) + L-histidine + ATP = L-histidyl-tRNA(His) + AMP + diphosphate + H(+). In Cutibacterium acnes (strain DSM 16379 / KPA171202) (Propionibacterium acnes), this protein is Histidine--tRNA ligase (hisS).